Here is an 86-residue protein sequence, read N- to C-terminus: Apolipoprotein C-I (86 aa).

The N-terminal stretch at 1 to 26 (MRLFLSLPVLVVVLLMILEGPGPAQG) is a signal peptide.

It belongs to the apolipoprotein C1 family.

Its subcellular location is the secreted. Inhibitor of lipoprotein binding to the low density lipoprotein (LDL) receptor, LDL receptor-related protein, and very low density lipoprotein (VLDL) receptor. Associates with high density lipoproteins (HDL) and the triacylglycerol-rich lipoproteins in the plasma and makes up about 10% of the protein of the VLDL and 2% of that of HDL. Appears to interfere directly with fatty acid uptake and is also the major plasma inhibitor of cholesteryl ester transfer protein (CETP). Binds free fatty acids and reduces their intracellular esterification. Modulates the interaction of APOE with beta-migrating VLDL and inhibits binding of beta-VLDL to the LDL receptor-related protein. The protein is Apolipoprotein C-I (APOC1) of Ateles geoffroyi (Black-handed spider monkey).